A 460-amino-acid chain; its full sequence is Phosphoglucosamine mutase (460 aa).

Ser102 (phosphoserine intermediate) is an active-site residue. Ser102, Asp241, Asp243, and Asp245 together coordinate Mg(2+). Position 102 is a phosphoserine (Ser102).

The protein belongs to the phosphohexose mutase family. Mg(2+) is required as a cofactor. Activated by phosphorylation.

It catalyses the reaction alpha-D-glucosamine 1-phosphate = D-glucosamine 6-phosphate. In terms of biological role, catalyzes the conversion of glucosamine-6-phosphate to glucosamine-1-phosphate. The sequence is that of Phosphoglucosamine mutase from Verminephrobacter eiseniae (strain EF01-2).